Here is a 304-residue protein sequence, read N- to C-terminus: Deoxyribonuclease-1-like 1 (304 aa).

The N-terminal stretch at 1-24 (MPYMAMHGLTVALLLIFLAGGTEA) is a signal peptide. The N-linked (GlcNAc...) asparagine glycan is linked to Asn-92. Glu-103 is an active-site residue. A glycan (N-linked (GlcNAc...) asparagine) is linked at Asn-123. The active site involves His-154. Residues Cys-193 and Cys-230 are joined by a disulfide bond. A glycan (N-linked (GlcNAc...) asparagine) is linked at Asn-229.

This sequence belongs to the DNase I family.

Its subcellular location is the endoplasmic reticulum. The polypeptide is Deoxyribonuclease-1-like 1 (DNASE1L1) (Cricetulus griseus (Chinese hamster)).